The primary structure comprises 89 residues: Helix-loop-helix protein 15 (89 aa).

The tract at residues 1–32 is disordered; that stretch reads MLMEDGGLDTTSEEYRKLSKAERRKRRRATPK. Positions 22–32 are enriched in basic residues; that stretch reads ERRKRRRATPK. Residues 32–45 form a basic motif region; that stretch reads KYRNLHATRERIRV. Residues 32-84 enclose the bHLH domain; sequence KYRNLHATRERIRVESFNMAFSQLRALLPTLPVEKKLSKIEILRFSIAYISFL. The interval 46–84 is helix-loop-helix motif; the sequence is ESFNMAFSQLRALLPTLPVEKKLSKIEILRFSIAYISFL.

Expressed in sensory head neurons of the lateral ganglion.

It localises to the nucleus. Its function is as follows. Transcription factor which binds the E box motif 5'-CA[TC][AG]TG-3'. Involved in modulating physiological aging, probably by regulating expression of branched-chain amino acid transferase-1, bcat-1. In Caenorhabditis elegans, this protein is Helix-loop-helix protein 15.